Here is a 336-residue protein sequence, read N- to C-terminus: Dihydroorotate dehydrogenase (quinone) (336 aa).

Residues 62-66 (AGLDK) and threonine 86 contribute to the FMN site. Lysine 66 lines the substrate pocket. 111 to 115 (NRMGF) is a binding site for substrate. Asparagine 139 and asparagine 172 together coordinate FMN. Asparagine 172 is a binding site for substrate. The active-site Nucleophile is serine 175. Residue asparagine 177 participates in substrate binding. FMN is bound by residues lysine 217 and threonine 245. 246-247 (NT) lines the substrate pocket. Residues glycine 268, glycine 297, and 318 to 319 (YS) contribute to the FMN site.

The protein belongs to the dihydroorotate dehydrogenase family. Type 2 subfamily. Monomer. Requires FMN as cofactor.

It localises to the cell membrane. The catalysed reaction is (S)-dihydroorotate + a quinone = orotate + a quinol. The protein operates within pyrimidine metabolism; UMP biosynthesis via de novo pathway; orotate from (S)-dihydroorotate (quinone route): step 1/1. Functionally, catalyzes the conversion of dihydroorotate to orotate with quinone as electron acceptor. In Salmonella arizonae (strain ATCC BAA-731 / CDC346-86 / RSK2980), this protein is Dihydroorotate dehydrogenase (quinone).